A 203-amino-acid polypeptide reads, in one-letter code: Holliday junction branch migration complex subunit RuvA (203 aa).

Positions 1–63 are domain I; sequence MIGKLSGKID…EEHIHLYGFL (63 aa). The tract at residues 64-142 is domain II; that stretch reads TIEEKNFFNL…KISTGAAIIN (79 aa). The tract at residues 143–149 is flexible linker; the sequence is DSLNIKN. Residues 150–203 form a domain III region; sequence ITSVASNEVIKALVNLGFSRFEAQNSVQGIVIQNPEISIDELIKTALKNRNAGL.

Belongs to the RuvA family. As to quaternary structure, homotetramer. Forms an RuvA(8)-RuvB(12)-Holliday junction (HJ) complex. HJ DNA is sandwiched between 2 RuvA tetramers; dsDNA enters through RuvA and exits via RuvB. An RuvB hexamer assembles on each DNA strand where it exits the tetramer. Each RuvB hexamer is contacted by two RuvA subunits (via domain III) on 2 adjacent RuvB subunits; this complex drives branch migration. In the full resolvosome a probable DNA-RuvA(4)-RuvB(12)-RuvC(2) complex forms which resolves the HJ.

It is found in the cytoplasm. In terms of biological role, the RuvA-RuvB-RuvC complex processes Holliday junction (HJ) DNA during genetic recombination and DNA repair, while the RuvA-RuvB complex plays an important role in the rescue of blocked DNA replication forks via replication fork reversal (RFR). RuvA specifically binds to HJ cruciform DNA, conferring on it an open structure. The RuvB hexamer acts as an ATP-dependent pump, pulling dsDNA into and through the RuvAB complex. HJ branch migration allows RuvC to scan DNA until it finds its consensus sequence, where it cleaves and resolves the cruciform DNA. This is Holliday junction branch migration complex subunit RuvA from Rickettsia akari (strain Hartford).